The sequence spans 114 residues: Ribosome-binding factor A (114 aa).

It belongs to the RbfA family. Monomer. Binds 30S ribosomal subunits, but not 50S ribosomal subunits or 70S ribosomes.

The protein resides in the cytoplasm. Its function is as follows. One of several proteins that assist in the late maturation steps of the functional core of the 30S ribosomal subunit. Associates with free 30S ribosomal subunits (but not with 30S subunits that are part of 70S ribosomes or polysomes). Required for efficient processing of 16S rRNA. May interact with the 5'-terminal helix region of 16S rRNA. This chain is Ribosome-binding factor A, found in Listeria innocua serovar 6a (strain ATCC BAA-680 / CLIP 11262).